The sequence spans 81 residues: Photosystem I iron-sulfur center (81 aa).

4Fe-4S ferredoxin-type domains follow at residues 1–31 and 39–68; these read MAHS…MVPW and IASA…VRVY. Positions 11, 14, 17, 21, 48, 51, 54, and 58 each coordinate [4Fe-4S] cluster.

As to quaternary structure, the eukaryotic PSI reaction center is composed of at least 11 subunits. The cofactor is [4Fe-4S] cluster.

It is found in the plastid. It localises to the chloroplast thylakoid membrane. The enzyme catalyses reduced [plastocyanin] + hnu + oxidized [2Fe-2S]-[ferredoxin] = oxidized [plastocyanin] + reduced [2Fe-2S]-[ferredoxin]. Functionally, apoprotein for the two 4Fe-4S centers FA and FB of photosystem I (PSI); essential for photochemical activity. FB is the terminal electron acceptor of PSI, donating electrons to ferredoxin. The C-terminus interacts with PsaA/B/D and helps assemble the protein into the PSI complex. Required for binding of PsaD and PsaE to PSI. PSI is a plastocyanin-ferredoxin oxidoreductase, converting photonic excitation into a charge separation, which transfers an electron from the donor P700 chlorophyll pair to the spectroscopically characterized acceptors A0, A1, FX, FA and FB in turn. The sequence is that of Photosystem I iron-sulfur center from Welwitschia mirabilis (Tree tumbo).